The primary structure comprises 627 residues: MDRLYYENPYDVVVVGAGHAGCEAALATARLGLKTAIMSISLDSVADLPCNPNIGGTGKGHLVKEVDALGGEMGLVIDKTYIQSRMLNTSKGPAVHSLRVQADKRKYHDEMKSVLENTENLDLIEAEVVDIEVEDNKIKSITTAQGAIFPTRAVILATGTYLKGLVMMGEYTYESGPHGMKSSKKLSYSLKNLGIELRRFKTGTPARVHRDSLNYEVMTVQPGDDDVIPFSFLNDGKDISKKQEHCYLTYTTLKTKQIIEDNLERSPMYAGIVKGVGPRYCPSIEDKIVRFPDRDEHQVFVEPEGLSTKEMYIQGVSSTLPEEVQKEMYKTIIGFENVRFMRSAYGIEYDCIDPTILKRTLEHLEINNLFFAGQINGSSGYEEAAGQGIIAGINAAMNLLGKEPFVLDRSDAYIGVLIDDLVTKGTNEPYRMMTSRCEYRLTLRQDNADLRLTERAHEIGLATDERYEKMLHKKKTIDEEIERLKSIMVTPTEETNEKLRNLGSSELKTGITLLDLIKRPELTYDKTEEFDAERTELPRYLRLQVETHIKYEGYIAKQMSQIKQFKKLENRKLDMIEDYKEVMGLSNEAVQKLNDIKPESLGQASRISGVSPSDINVLLIYMETRKK.

FAD contacts are provided by residues 16 to 21 (GAGHAG), Val-128, and Ser-183. 277-291 (GPRYCPSIEDKIVRF) is a binding site for NAD(+). Gln-374 contributes to the FAD binding site.

Belongs to the MnmG family. In terms of assembly, homodimer. Heterotetramer of two MnmE and two MnmG subunits. FAD is required as a cofactor.

The protein resides in the cytoplasm. Its function is as follows. NAD-binding protein involved in the addition of a carboxymethylaminomethyl (cmnm) group at the wobble position (U34) of certain tRNAs, forming tRNA-cmnm(5)s(2)U34. In Finegoldia magna (strain ATCC 29328 / DSM 20472 / WAL 2508) (Peptostreptococcus magnus), this protein is tRNA uridine 5-carboxymethylaminomethyl modification enzyme MnmG.